We begin with the raw amino-acid sequence, 318 residues long: MSCTRMIQVLDPRPLTSSVMPVDVAVRLCLAHSPPLKSFLSPYDDFQRRNFVNKLKPLKSCLNIKQEARAQDDWKPSHNQAKKRVVFADSKGLSLTAIHVFSDLPEEPVWDLQFDLLDLNDISSGLKLHEEKNLILDFPQPSADYLSFRNHFQKNSVCLENCSLQERTVTGTVKVKNMSFEKKVQIRITFDSWQSYNDVDCAYMKNVYGGSESDTFSFAIDLPSVIPTKEKIEFCVAYHANGQVFWDNNEGQNYRIVHVQWKPDGVQTQMAAQDCAFHQAPPPKAELESTVFGSPRLASGLFPEWQSWGRMENLASYR.

A PP1-binding motif motif is present at residues 84 to 87 (RVVF). The interval 141-263 (PSADYLSFRN…YRIVHVQWKP (123 aa)) is interaction with EPM2A. The 109-residue stretch at 149-257 (RNHFQKNSVC…NNEGQNYRIV (109 aa)) folds into the CBM21 domain.

In terms of assembly, interacts with PPP1CC catalytic subunit of PP1 and associates with glycogen. Forms complexes with glycogen phosphorylase, glycogen synthase and phosphorylase kinase which is necessary for its regulation of PP1 activity. Also interacts with EPM2A/laforin. In terms of processing, ubiquitinated by NHLRC1/malin in a EPM2A/laforin-dependent manner.

In terms of biological role, acts as a glycogen-targeting subunit for PP1 and regulates its activity. Activates glycogen synthase, reduces glycogen phosphorylase activity and limits glycogen breakdown. Dramatically increases basal and insulin-stimulated glycogen synthesis upon overexpression in a variety of cell types. In Bos taurus (Bovine), this protein is Protein phosphatase 1 regulatory subunit 3C.